The sequence spans 370 residues: Glutamate 5-kinase (370 aa).

Residue lysine 11 coordinates ATP. Positions 52, 139, and 151 each coordinate substrate. ATP is bound by residues threonine 171–aspartate 172 and threonine 213–lysine 219. The 79-residue stretch at threonine 278–glutamate 356 folds into the PUA domain.

This sequence belongs to the glutamate 5-kinase family.

It is found in the cytoplasm. It carries out the reaction L-glutamate + ATP = L-glutamyl 5-phosphate + ADP. It participates in amino-acid biosynthesis; L-proline biosynthesis; L-glutamate 5-semialdehyde from L-glutamate: step 1/2. In terms of biological role, catalyzes the transfer of a phosphate group to glutamate to form L-glutamate 5-phosphate. The chain is Glutamate 5-kinase from Synechococcus sp. (strain ATCC 27144 / PCC 6301 / SAUG 1402/1) (Anacystis nidulans).